Reading from the N-terminus, the 313-residue chain is Type I restriction enzyme EcoprrI endonuclease subunit (313 aa).

The protein belongs to the HsdR family. In terms of assembly, the type I restriction/modification system is composed of three polypeptides R, M and S; the restriction enzyme has stoichiometry R(2)M(2)S(1) while the methyltransferase is M(2)S(1).

It catalyses the reaction Endonucleolytic cleavage of DNA to give random double-stranded fragments with terminal 5'-phosphates, ATP is simultaneously hydrolyzed.. In terms of biological role, the subtype C restriction (R) subunit of a type I restriction enzyme that recognizes 5'-CCAN(7)RTGC-3' and cleaves a random distance away. The R subunit is required for both endonuclease and ATPase activities but not for modification. Cleaves only non-methylated DNA, hemi-methylated and fully methylated DNA are not substrates. After locating a non-methylated recognition site, the enzyme complex serves as a molecular motor that translocates DNA in an ATP-dependent manner until a collision occurs that triggers cleavage. The prr locus restricts phage T4 mutants lacking polynucleotide kinase or RNA ligase; T4 mutants lacking these genes manifest a T4-induced anticodon nuclease (ACNase). This is a putative 'masking-agent' for the ACNase encoded by prrC. It is thought that Stp and other T4-encoded ACNase factors counteract the masking agents, thus activating the latent ACNase. In Escherichia coli, this protein is Type I restriction enzyme EcoprrI endonuclease subunit.